Consider the following 113-residue polypeptide: Coat protein TP1 (113 aa).

Its subcellular location is the virion. The polypeptide is Coat protein TP1 (Thermoproteus tenax virus 1 (strain KRA1) (TTV1)).